Reading from the N-terminus, the 362-residue chain is Flotillin-like protein FloA 2 (362 aa).

A helical membrane pass occupies residues 24-44 (TALLIGALVIFAGIVVVLFIF).

This sequence belongs to the flotillin-like FloA family. Homooligomerizes.

It localises to the cell membrane. The protein localises to the membrane raft. Functionally, found in functional membrane microdomains (FMM) that may be equivalent to eukaryotic membrane rafts. FMMs are highly dynamic and increase in number as cells age. Flotillins are thought to be important factors in membrane fluidity. The protein is Flotillin-like protein FloA 2 of Rhodopirellula baltica (strain DSM 10527 / NCIMB 13988 / SH1).